We begin with the raw amino-acid sequence, 175 residues long: NADH-quinone oxidoreductase subunit I (175 aa).

4Fe-4S ferredoxin-type domains follow at residues 69–98 (KRDE…IEAG) and 115–144 (KKFE…LDGP). Cysteine 78, cysteine 81, cysteine 84, cysteine 88, cysteine 124, cysteine 127, cysteine 130, and cysteine 134 together coordinate [4Fe-4S] cluster.

It belongs to the complex I 23 kDa subunit family. In terms of assembly, NDH-1 is composed of 14 different subunits. Subunits NuoA, H, J, K, L, M, N constitute the membrane sector of the complex. Requires [4Fe-4S] cluster as cofactor.

Its subcellular location is the cell inner membrane. The enzyme catalyses a quinone + NADH + 5 H(+)(in) = a quinol + NAD(+) + 4 H(+)(out). NDH-1 shuttles electrons from NADH, via FMN and iron-sulfur (Fe-S) centers, to quinones in the respiratory chain. The immediate electron acceptor for the enzyme in this species is believed to be ubiquinone. Couples the redox reaction to proton translocation (for every two electrons transferred, four hydrogen ions are translocated across the cytoplasmic membrane), and thus conserves the redox energy in a proton gradient. The protein is NADH-quinone oxidoreductase subunit I of Leptospira borgpetersenii serovar Hardjo-bovis (strain JB197).